The primary structure comprises 122 residues: Ubiquitin-related modifier 1 (122 aa).

A compositionally biased stretch (polar residues) spans 33-48 (PSTVPADNNTSVTTKD). A disordered region spans residues 33-52 (PSTVPADNNTSVTTKDAASP). At Gly-122 the chain carries 1-thioglycine. Gly-122 participates in a covalent cross-link: Glycyl lysine isopeptide (Gly-Lys) (interchain with K-? in acceptor proteins).

It belongs to the URM1 family. In terms of processing, C-terminal thiocarboxylation occurs in 2 steps, it is first acyl-adenylated (-COAMP) via the hesA/moeB/thiF part of UBA4, then thiocarboxylated (-COSH) via the rhodanese domain of UBA4.

The protein localises to the cytoplasm. Its pathway is tRNA modification; 5-methoxycarbonylmethyl-2-thiouridine-tRNA biosynthesis. Functionally, acts as a sulfur carrier required for 2-thiolation of mcm(5)S(2)U at tRNA wobble positions of cytosolic tRNA(Lys), tRNA(Glu) and tRNA(Gln). Serves as sulfur donor in tRNA 2-thiolation reaction by being thiocarboxylated (-COSH) at its C-terminus by the MOCS3 homolog UBA4. The sulfur is then transferred to tRNA to form 2-thiolation of mcm(5)S(2)U. Prior mcm(5) tRNA modification by the elongator complex is required for 2-thiolation. Also acts as a ubiquitin-like protein (UBL) that is covalently conjugated via an isopeptide bond to lysine residues of target proteins such as AHP1. The thiocarboxylated form serves as substrate for conjugation and oxidative stress specifically induces the formation of UBL-protein conjugates. The chain is Ubiquitin-related modifier 1 from Laccaria bicolor (strain S238N-H82 / ATCC MYA-4686) (Bicoloured deceiver).